The sequence spans 510 residues: Nucleosome assembly protein 1-like 3 (510 aa).

Disordered regions lie at residues 1-99 (MAEA…LGTN) and 161-311 (PTEE…KRED). The segment covering 35–74 (SSSSSSSTSGSSSSSSTSGSSSSSGSGSSSSSSGSGSTSS) has biased composition (low complexity). The span at 161-182 (PTEEECEWNSEDEEFSSDEEVQ) shows a compositional bias: acidic residues. 3 stretches are compositionally biased toward basic and acidic residues: residues 200 to 229 (PKENPEVKAEEKEVPKEIPEVKDEEKEVPK), 235 to 246 (KAEEKADSKDCM), and 254 to 300 (EDPK…VDLK).

The protein belongs to the nucleosome assembly protein (NAP) family.

The protein resides in the nucleus. This chain is Nucleosome assembly protein 1-like 3 (NAP1L3), found in Pongo abelii (Sumatran orangutan).